A 450-amino-acid polypeptide reads, in one-letter code: Ribosomal protein uS12 methylthiotransferase RimO (450 aa).

One can recognise an MTTase N-terminal domain in the interval 10-125 (SRIALVSLGC…VVDIVRRAAT (116 aa)). [4Fe-4S] cluster contacts are provided by Cys-19, Cys-54, Cys-88, Cys-162, Cys-166, and Cys-169. A Radical SAM core domain is found at 148–378 (SGSPFTAYLK…AAVQREVSRA (231 aa)). The region spanning 381 to 447 (RARVGSEVTV…PYDLRARVLS (67 aa)) is the TRAM domain.

This sequence belongs to the methylthiotransferase family. RimO subfamily. The cofactor is [4Fe-4S] cluster.

The protein localises to the cytoplasm. The catalysed reaction is L-aspartate(89)-[ribosomal protein uS12]-hydrogen + (sulfur carrier)-SH + AH2 + 2 S-adenosyl-L-methionine = 3-methylsulfanyl-L-aspartate(89)-[ribosomal protein uS12]-hydrogen + (sulfur carrier)-H + 5'-deoxyadenosine + L-methionine + A + S-adenosyl-L-homocysteine + 2 H(+). Functionally, catalyzes the methylthiolation of an aspartic acid residue of ribosomal protein uS12. In Desulforudis audaxviator (strain MP104C), this protein is Ribosomal protein uS12 methylthiotransferase RimO.